The primary structure comprises 171 residues: Probable deoxyuridine 5'-triphosphate nucleotidohydrolase (171 aa).

The protein belongs to the dCTP deaminase family. Archaeal dUTPase subfamily.

It catalyses the reaction dUTP + H2O = dUMP + diphosphate + H(+). Its pathway is pyrimidine metabolism; dUMP biosynthesis; dUMP from dCTP (dUTP route): step 2/2. This enzyme is involved in nucleotide metabolism: it produces dUMP, the immediate precursor of thymidine nucleotides and it decreases the intracellular concentration of dUTP so that uracil cannot be incorporated into DNA. In Methanosarcina mazei (strain ATCC BAA-159 / DSM 3647 / Goe1 / Go1 / JCM 11833 / OCM 88) (Methanosarcina frisia), this protein is Probable deoxyuridine 5'-triphosphate nucleotidohydrolase.